Here is a 328-residue protein sequence, read N- to C-terminus: MKLATPRWWYERDRRSMPMTRALLTPLSWAWAGVTARRIARARPLDAGAPVICVGNLTMGGAGKTPVVREIARRLGGHVLSRGYGGSLAGPVRVDPAVHASGEVGDEPLMLARDLPVWVSRDRLAGARAAAAAGARVVVMDDGHQNPSVKKALSLVVVDGETRNGEWPFGDGRVFPAGPMREPLAAGLARADAAVILLPADLAAPDPELVRVLSKVPVLIARLEPEGPPPVGPQVAFAGIGKPWKFERALKAAGCELVEFAPFPDHYAYDAAALALLADRAAQDGAGLLTTEKDWIRLPPAWRERVRPWPVRAVFQDEAALDAVVGGL.

Residue 58–65 (TMGGAGKT) participates in ATP binding.

The protein belongs to the LpxK family.

The enzyme catalyses a lipid A disaccharide + ATP = a lipid IVA + ADP + H(+). Its pathway is glycolipid biosynthesis; lipid IV(A) biosynthesis; lipid IV(A) from (3R)-3-hydroxytetradecanoyl-[acyl-carrier-protein] and UDP-N-acetyl-alpha-D-glucosamine: step 6/6. In terms of biological role, transfers the gamma-phosphate of ATP to the 4'-position of a tetraacyldisaccharide 1-phosphate intermediate (termed DS-1-P) to form tetraacyldisaccharide 1,4'-bis-phosphate (lipid IVA). In Phenylobacterium zucineum (strain HLK1), this protein is Tetraacyldisaccharide 4'-kinase.